We begin with the raw amino-acid sequence, 609 residues long: Threonine--tRNA ligase (609 aa).

Positions 1 to 143 are editing domain; it reads MRVLYLHTER…SFKPGDSRAE (143 aa). Catalytic stretches follow at residues 195–491 and 196–491; these read PRYL…PRLP and RYLE…PRLP. Residues Cys288, His339, and His460 each contribute to the Zn(2+) site.

It belongs to the class-II aminoacyl-tRNA synthetase family. Homodimer. It depends on Zn(2+) as a cofactor.

Its subcellular location is the cytoplasm. The catalysed reaction is tRNA(Thr) + L-threonine + ATP = L-threonyl-tRNA(Thr) + AMP + diphosphate + H(+). In terms of biological role, catalyzes the attachment of threonine to tRNA(Thr) in a two-step reaction: L-threonine is first activated by ATP to form Thr-AMP and then transferred to the acceptor end of tRNA(Thr). Also edits incorrectly charged L-seryl-tRNA(Thr). The polypeptide is Threonine--tRNA ligase (Pyrobaculum neutrophilum (strain DSM 2338 / JCM 9278 / NBRC 100436 / V24Sta) (Thermoproteus neutrophilus)).